Reading from the N-terminus, the 376-residue chain is 1-acyl-sn-glycerol-3-phosphate acyltransferase 3 (376 aa).

A run of 2 helical transmembrane segments spans residues 14–34 (VLFLISGLIVNIIQLVFFIIV) and 49–69 (VAELLWLQLIWLFDWWACIKI). An HXXXXD motif motif is present at residues 92–97 (HRSDID). 3 helical membrane passes run 98 to 118 (WLIGWVMAQRVGCLGSSLAIM), 306 to 326 (LIVVIIWLGFLVFGGFKLLQW), and 335 to 355 (IILLFVFFLVIATITMQILIQ).

This sequence belongs to the 1-acyl-sn-glycerol-3-phosphate acyltransferase family. Predominantly expressed in pollen.

Its subcellular location is the membrane. The catalysed reaction is a 1-acyl-sn-glycero-3-phosphate + an acyl-CoA = a 1,2-diacyl-sn-glycero-3-phosphate + CoA. Its pathway is phospholipid metabolism; CDP-diacylglycerol biosynthesis; CDP-diacylglycerol from sn-glycerol 3-phosphate: step 2/3. In terms of biological role, converts lysophosphatidic acid (LPA) into phosphatidic acid by incorporating acyl moiety at the 2 position. Has preference for C-18-CoA substrates compared to C-16-CoA substrates. The polypeptide is 1-acyl-sn-glycerol-3-phosphate acyltransferase 3 (LPAT3) (Arabidopsis thaliana (Mouse-ear cress)).